Consider the following 422-residue polypeptide: MESAVSTSTQVPDEFDRNVPRICGVCGDKATGFHFNAMTCEGCKGFFRRSMKRKASFTCPFNGSCTITKDNRRHCQACRLKRCLDIGMMKEFILTDEEVQRKKELIQRRKDEEAHREAQKPRLSDEQRNIIDTLVDAHHKTYDDSYSDFSRFRPPVREGPVTRSASRAASLHSLSDASSDSFSHSPESGDRKMNLSNLLMMYQEQGLSSSPDSKEEDGSSLSMLPHLADLVSYSIQKVIGFAKMIPGFRELTAEDQIALLKSSAIEVIMLRSNQSFSLEDMSWSCGGPEFKYCVNDVTKAGHTLELLEPLVKFQVGLKKLNLHEEEHVLLMAICLLSPDRPGVQDHVRVEALQDKVSEVLQAYIRAHHPGGRLLYAKMIQKLADLRSLNEEHSKQYRSLSFQPEHSMQLTPLVLEVFGGQVT.

Residues 20-95 (PRICGVCGDK…IGMMKEFILT (76 aa)) constitute a DNA-binding region (nuclear receptor). C23, C26, C40, C43, C59, C65, C75, and C78 together coordinate Zn(2+). 2 NR C4-type zinc fingers span residues 23–43 (CGVC…CEGC) and 59–78 (CPFN…CQAC). Residues 96 to 125 (DEEVQRKKELIQRRKDEEAHREAQKPRLSD) form a hinge region. Positions 106 to 128 (IQRRKDEEAHREAQKPRLSDEQR) are disordered. An NR LBD domain is found at 126-418 (EQRNIIDTLV…LTPLVLEVFG (293 aa)). Y142 serves as a coordination point for calcitriol. The segment at 145–190 (SYSDFSRFRPPVREGPVTRSASRAASLHSLSDASSDSFSHSPESGD) is disordered. Low complexity predominate over residues 163–185 (RSASRAASLHSLSDASSDSFSHS). S234 serves as a coordination point for calcitriol. Positions 243–261 (KMIPGFRELTAEDQIALLK) are interaction with coactivator LXXLL motif. The calcitriol site is built by R271, S275, H302, and H392. Positions 411–419 (PLVLEVFGG) match the 9aaTAD motif.

Belongs to the nuclear hormone receptor family. In terms of assembly, homodimer in the absence of bound vitamin D3. Heterodimer with RXRA after vitamin D3 binding. Interacts with ncoa1 and possibly other coactivators, leading to a strong increase of transcription of target genes. Detected in embryo 24 to 48 hours after fertilization, and in intestinal bulb.

The protein resides in the nucleus. Its subcellular location is the cytoplasm. Its function is as follows. Nuclear receptor for calcitriol, the active form of vitamin D3 which mediates the action of this vitamin on cells. Enters the nucleus upon vitamin D3 binding where it forms heterodimers with the retinoid X receptor/RXR. The VDR-RXR heterodimers bind to specific response elements on DNA and activate the transcription of vitamin D3-responsive target genes. Recruited to promoters via its interaction with BAZ1B/WSTF which mediates the interaction with acetylated histones, an essential step for VDR-promoter association. Plays a central role in calcium homeostasis. This Danio rerio (Zebrafish) protein is Vitamin D3 receptor B (vdrb).